The chain runs to 247 residues: Leucyl/phenylalanyl-tRNA--protein transferase (247 aa).

It belongs to the L/F-transferase family.

It is found in the cytoplasm. It catalyses the reaction N-terminal L-lysyl-[protein] + L-leucyl-tRNA(Leu) = N-terminal L-leucyl-L-lysyl-[protein] + tRNA(Leu) + H(+). It carries out the reaction N-terminal L-arginyl-[protein] + L-leucyl-tRNA(Leu) = N-terminal L-leucyl-L-arginyl-[protein] + tRNA(Leu) + H(+). The enzyme catalyses L-phenylalanyl-tRNA(Phe) + an N-terminal L-alpha-aminoacyl-[protein] = an N-terminal L-phenylalanyl-L-alpha-aminoacyl-[protein] + tRNA(Phe). Functionally, functions in the N-end rule pathway of protein degradation where it conjugates Leu, Phe and, less efficiently, Met from aminoacyl-tRNAs to the N-termini of proteins containing an N-terminal arginine or lysine. The chain is Leucyl/phenylalanyl-tRNA--protein transferase from Solidesulfovibrio magneticus (strain ATCC 700980 / DSM 13731 / RS-1) (Desulfovibrio magneticus).